Here is a 549-residue protein sequence, read N- to C-terminus: Chaperonin GroEL (549 aa).

ATP is bound by residues 30–33 (TLGP), K51, 87–91 (DGTTT), G415, 479–481 (NAA), and D495.

The protein belongs to the chaperonin (HSP60) family. Forms a cylinder of 14 subunits composed of two heptameric rings stacked back-to-back. Interacts with the co-chaperonin GroES.

It localises to the cytoplasm. The enzyme catalyses ATP + H2O + a folded polypeptide = ADP + phosphate + an unfolded polypeptide.. In terms of biological role, together with its co-chaperonin GroES, plays an essential role in assisting protein folding. The GroEL-GroES system forms a nano-cage that allows encapsulation of the non-native substrate proteins and provides a physical environment optimized to promote and accelerate protein folding. This is Chaperonin GroEL from Leptothrix cholodnii (strain ATCC 51168 / LMG 8142 / SP-6) (Leptothrix discophora (strain SP-6)).